The sequence spans 296 residues: Mitochondrial arginine transporter BAC2 (296 aa).

3 Solcar repeats span residues 13–93, 104–187, and 198–282; these read GREF…FSRS, PSYR…VRER, and ENLR…ALRC. A run of 6 helical transmembrane segments spans residues 16-36, 70-90, 110-130, 162-181, 204-224, and 260-280; these read FVAGGFGGVAGIISGYPLDTL, AAPLASVTFQNAMVFQIYAIF, ALGGVATGAVQSLLLTPVELI, GLTITVLRDAPAHGLYFWTY, LVAGGLAGVASWVACYPLDVV, and TAVARAFVVNGAIFAAYEVAL.

The protein belongs to the mitochondrial carrier (TC 2.A.29) family. In terms of tissue distribution, high expression in flowers, stamens, petals and pollen. Expressed in roots, leaves and stems.

It is found in the mitochondrion inner membrane. With respect to regulation, inhibited by mercuric chloride. In terms of biological role, mitochondrial arginine transporter that catalyzes the counter-exchange of arginine with lysine, ornithine, arginine, histidine and citrulline. Substrate preference in reconstituted proteoliposomes is arginine &gt; homoarginine &gt; citrulline &gt; histidine &gt; lysine &gt; ornithine. May be involved in the delivery of arginine, released from seed reserves, to mitochondrial arginase and the export of ornithine. May contribute to proline accumulation in response to hyperosmotic stress. The polypeptide is Mitochondrial arginine transporter BAC2 (BAC2) (Arabidopsis thaliana (Mouse-ear cress)).